Reading from the N-terminus, the 446-residue chain is D(1A) dopamine receptor (446 aa).

Over 1–23 (MRTLNTSTMEGTGLVAERDFSFR) the chain is Extracellular. N-linked (GlcNAc...) asparagine glycosylation is present at N5. Residues 24–49 (ILTACFLSLLILSTLLGNTLVCAAVI) traverse the membrane as a helical segment. Residues 50–60 (RFRHLRSKVTN) lie on the Cytoplasmic side of the membrane. Residues 61-87 (FFVISLAVSDLLVAVLVMPWKAVAEIA) traverse the membrane as a helical segment. At 88–96 (GFWPFGSFC) the chain is on the extracellular side. C96 and C186 are disulfide-bonded. Residues 97–119 (NIWVAFDIMCSTASILNLCVISV) traverse the membrane as a helical segment. The Cytoplasmic portion of the chain corresponds to 120 to 138 (DRYWAISSPFRYERKMTPK). Residues 139-163 (AAFILISVAWTLSVLISFIPVQLSW) form a helical membrane-spanning segment. Residues 164-192 (HKAKPTGPSEGNATSLGKTINNCDSSLSR) are Extracellular-facing. N175 carries N-linked (GlcNAc...) asparagine glycosylation. The helical transmembrane segment at 193–218 (TYAISSSLISFYIPVAIMIVTYTRIY) threads the bilayer. Over 219–272 (RIAQKQIRRISALERAAVHAKNCQTTTGNGNPMECSQPESSFKMSFKRETKVLK) the chain is Cytoplasmic. Residues 273-299 (TLSVIMGVFVCCWLPFFILNCMVPFCG) form a helical membrane-spanning segment. Residues 300 to 312 (SGETKPFCIDSIT) lie on the Extracellular side of the membrane. The chain crosses the membrane as a helical span at residues 313–337 (FDVFVWFGWANSSLNPIIYAFNADF). Topologically, residues 338–446 (RKAFSTLLGC…PITQNGQHPT (109 aa)) are cytoplasmic. S-palmitoyl cysteine attachment occurs at residues C347 and C351.

Belongs to the G-protein coupled receptor 1 family. As to quaternary structure, interacts with DNAJC14 via its C-terminus. Interacts with DRD2. Interacts with DORIP1.

It is found in the cell membrane. The protein resides in the endoplasmic reticulum membrane. The protein localises to the cell projection. It localises to the cilium membrane. Its subcellular location is the dendrite. It is found in the dendritic spine. Dopamine receptor whose activity is mediated by G proteins which activate adenylyl cyclase. In Bos taurus (Bovine), this protein is D(1A) dopamine receptor (DRD1).